Reading from the N-terminus, the 520-residue chain is Ribonuclease Y (520 aa).

The helical transmembrane segment at 3 to 23 (IVIVVISILLALIVGIVVGYL) threads the bilayer. The segment covering 81 to 118 (RMEAQKQENRLMQKEENLDRKSETLDKRESSLESKEQS) has biased composition (basic and acidic residues). Residues 81-125 (RMEAQKQENRLMQKEENLDRKSETLDKRESSLESKEQSLTEQQQQ) are disordered. A KH domain is found at 210–273 (TVSVVNLPND…EIARMALEKL (64 aa)). Residues 336–429 (GLKHSAEVAY…VAAADALSAA (94 aa)) form the HD domain.

It belongs to the RNase Y family.

It is found in the cell membrane. Endoribonuclease that initiates mRNA decay. This Oceanobacillus iheyensis (strain DSM 14371 / CIP 107618 / JCM 11309 / KCTC 3954 / HTE831) protein is Ribonuclease Y.